The primary structure comprises 189 residues: Peptidyl-tRNA hydrolase (189 aa).

Y15 serves as a coordination point for tRNA. The Proton acceptor role is filled by H20. Residues F66, N68, and N114 each contribute to the tRNA site.

This sequence belongs to the PTH family. As to quaternary structure, monomer.

The protein resides in the cytoplasm. It catalyses the reaction an N-acyl-L-alpha-aminoacyl-tRNA + H2O = an N-acyl-L-amino acid + a tRNA + H(+). Hydrolyzes ribosome-free peptidyl-tRNAs (with 1 or more amino acids incorporated), which drop off the ribosome during protein synthesis, or as a result of ribosome stalling. In terms of biological role, catalyzes the release of premature peptidyl moieties from peptidyl-tRNA molecules trapped in stalled 50S ribosomal subunits, and thus maintains levels of free tRNAs and 50S ribosomes. This chain is Peptidyl-tRNA hydrolase, found in Streptococcus gordonii (strain Challis / ATCC 35105 / BCRC 15272 / CH1 / DL1 / V288).